Here is a 317-residue protein sequence, read N- to C-terminus: Brain-specific serine protease 4 (317 aa).

The N-terminal stretch at 1-32 (MVVSGAPPALGGGCLGTFTSLLLLASTAILNA) is a signal peptide. A Peptidase S1 domain is found at 50 to 290 (VVGGEDSTDS…HRSWVEKIVQ (241 aa)). The N-linked (GlcNAc...) asparagine glycan is linked to Asn70. Cys75 and Cys91 are disulfide-bonded. Active-site charge relay system residues include His90 and Asp141. 3 disulfide bridges follow: Cys175/Cys248, Cys208/Cys227, and Cys238/Cys266. Residue Ser242 is the Charge relay system of the active site.

The protein belongs to the peptidase S1 family. Expressed abundantly in the epithelial cells of the airways, including trachea, esophagus and fetal lung. Scarce in adult lung. Expressed at low levels in placenta, pancreas, prostate and thyroid gland.

Its subcellular location is the secreted. Its function is as follows. Preferentially cleaves the synthetic substrate H-D-Leu-Thr-Arg-pNA compared to tosyl-Gly-Pro-Arg-pNA. This is Brain-specific serine protease 4 (PRSS22) from Homo sapiens (Human).